A 158-amino-acid polypeptide reads, in one-letter code: NADH-quinone oxidoreductase subunit B (158 aa).

[4Fe-4S] cluster contacts are provided by Cys-37, Cys-38, Cys-102, and Cys-132.

Belongs to the complex I 20 kDa subunit family. As to quaternary structure, NDH-1 is composed of 14 different subunits. Subunits NuoB, C, D, E, F, and G constitute the peripheral sector of the complex. [4Fe-4S] cluster is required as a cofactor.

The protein localises to the cell inner membrane. It carries out the reaction a quinone + NADH + 5 H(+)(in) = a quinol + NAD(+) + 4 H(+)(out). Its function is as follows. NDH-1 shuttles electrons from NADH, via FMN and iron-sulfur (Fe-S) centers, to quinones in the respiratory chain. Couples the redox reaction to proton translocation (for every two electrons transferred, four hydrogen ions are translocated across the cytoplasmic membrane), and thus conserves the redox energy in a proton gradient. This chain is NADH-quinone oxidoreductase subunit B, found in Bordetella avium (strain 197N).